Consider the following 184-residue polypeptide: MAPKAVLVGLPGSGKSTIGRRLAKALGVSLLDTDAAIEQQAGRSIAEIFATDGEEEFRRIEEEVVRAALVDHDGVLSLGGGAVTSPGVRSALDGHTVVYLEISAAEGVRRTGGSNVRPLLAGPDRAEKFRALMSQRIPLYRRVSTIRVDTNRRNPGAVVRYIMSRLDDPTPNTSPSSTASGAAT.

An ATP-binding site is contributed by 12-17 (GSGKST). Serine 16 is a Mg(2+) binding site. Substrate is bound by residues aspartate 34, arginine 58, and glycine 80. Arginine 117 contributes to the ATP binding site. Arginine 136 provides a ligand contact to substrate. Residue arginine 153 participates in ATP binding. Positions 164-184 (SRLDDPTPNTSPSSTASGAAT) are disordered. Residues 169–184 (PTPNTSPSSTASGAAT) are compositionally biased toward low complexity.

This sequence belongs to the shikimate kinase family. Monomer. It depends on Mg(2+) as a cofactor.

The protein localises to the cytoplasm. The enzyme catalyses shikimate + ATP = 3-phosphoshikimate + ADP + H(+). The protein operates within metabolic intermediate biosynthesis; chorismate biosynthesis; chorismate from D-erythrose 4-phosphate and phosphoenolpyruvate: step 5/7. In terms of biological role, catalyzes the specific phosphorylation of the 3-hydroxyl group of shikimic acid using ATP as a cosubstrate. In Mycobacterium ulcerans (strain Agy99), this protein is Shikimate kinase.